The sequence spans 251 residues: 5'-nucleotidase SurE 1 (251 aa).

4 residues coordinate a divalent metal cation: aspartate 8, aspartate 9, serine 39, and asparagine 95.

It belongs to the SurE nucleotidase family. Requires a divalent metal cation as cofactor.

The protein resides in the cytoplasm. The enzyme catalyses a ribonucleoside 5'-phosphate + H2O = a ribonucleoside + phosphate. Its function is as follows. Nucleotidase that shows phosphatase activity on nucleoside 5'-monophosphates. The polypeptide is 5'-nucleotidase SurE 1 (Thermus thermophilus (strain ATCC BAA-163 / DSM 7039 / HB27)).